The primary structure comprises 1235 residues: Phosphorylase b kinase regulatory subunit alpha, liver isoform (1235 aa).

Phosphoserine occurs at positions 697, 731, and 737. Residues 808-838 (LSELYGKAGLNQEWGLIRYISGLLRKKVEVL) are calmodulin-binding. Low complexity predominate over residues 976–986 (SSASSPAISIH). The disordered stretch occupies residues 976 to 1002 (SSASSPAISIHEVGHTGVTKTERSGIN). Phosphoserine occurs at positions 984, 1016, and 1044. The span at 1032 to 1053 (AYSKSVRSSTPSSPTGTSSSDS) shows a compositional bias: low complexity. The segment at 1032–1060 (AYSKSVRSSTPSSPTGTSSSDSGGHHISW) is disordered. Positions 1059 to 1099 (SWGERQGQWLRRRRLDGAINRVPVGFYQRVWKILQKCHGLS) are calmodulin-binding. A lipid anchor (S-farnesyl cysteine) is attached at cysteine 1232.

It belongs to the phosphorylase b kinase regulatory chain family. As to quaternary structure, hexadecamer of 4 heterotetramers, each composed of alpha, beta, gamma, and delta subunits. Alpha (PHKA1 or PHKA2) and beta (PHKB) are regulatory subunits, gamma (PHKG1 or PHKG2) is the catalytic subunit, and delta is calmodulin. Post-translationally, although the final Cys may be farnesylated, the terminal tripeptide is probably not removed, and the C-terminus is not methylated. As to expression, predominantly expressed in liver and other non-muscle tissues.

It localises to the cell membrane. It participates in glycan biosynthesis; glycogen metabolism. With respect to regulation, by phosphorylation of various serine residues and by calcium. In terms of biological role, phosphorylase b kinase catalyzes the phosphorylation of serine in certain substrates, including troponin I. The alpha chain may bind calmodulin. The protein is Phosphorylase b kinase regulatory subunit alpha, liver isoform (PHKA2) of Oryctolagus cuniculus (Rabbit).